Reading from the N-terminus, the 231-residue chain is Large ribosomal subunit protein uL1 (231 aa).

It belongs to the universal ribosomal protein uL1 family. As to quaternary structure, part of the 50S ribosomal subunit.

In terms of biological role, binds directly to 23S rRNA. The L1 stalk is quite mobile in the ribosome, and is involved in E site tRNA release. Functionally, protein L1 is also a translational repressor protein, it controls the translation of the L11 operon by binding to its mRNA. In Stutzerimonas stutzeri (strain A1501) (Pseudomonas stutzeri), this protein is Large ribosomal subunit protein uL1.